A 102-amino-acid chain; its full sequence is Protein V2 (102 aa).

Functionally, may be involved in the regulation of ssDNA versus dsDNA levels. The protein is Protein V2 of Beet curly top virus (strain California/Logan) (BCTV).